The following is a 107-amino-acid chain: uncharacterized protein (107 aa).

Positions 88–107 are disordered; it reads GSTPWGSGRQVNAARPIGGR.

It is found in the virion. This is an uncharacterized protein from Acanthamoeba polyphaga (Amoeba).